We begin with the raw amino-acid sequence, 254 residues long: Acetylglutamate kinase (254 aa).

Residues 40-41 (GG), R62, and N154 each bind substrate.

Belongs to the acetylglutamate kinase family. ArgB subfamily.

The protein resides in the cytoplasm. It carries out the reaction N-acetyl-L-glutamate + ATP = N-acetyl-L-glutamyl 5-phosphate + ADP. It participates in amino-acid biosynthesis; L-arginine biosynthesis; N(2)-acetyl-L-ornithine from L-glutamate: step 2/4. Catalyzes the ATP-dependent phosphorylation of N-acetyl-L-glutamate. The chain is Acetylglutamate kinase from Staphylococcus aureus (strain Mu3 / ATCC 700698).